The primary structure comprises 916 residues: Translation initiation factor IF-2 (916 aa).

Basic and acidic residues predominate over residues 151–191 (NLDEQQRLAESDRARDEAIQRKRDEEQAAKDRVEAERKAAE). Disordered regions lie at residues 151-262 (NLDE…SHVM) and 280-328 (HLSA…ERPT). 2 stretches are compositionally biased toward low complexity: residues 192–243 (EAAA…ATPA) and 293–305 (RGKP…SSSS). The 170-residue stretch at 415–584 (SRPPVVTIMG…SLQAEVLELK (170 aa)) folds into the tr-type G domain. The G1 stretch occupies residues 424–431 (GHVDHGKT). A GTP-binding site is contributed by 424–431 (GHVDHGKT). Residues 449–453 (GITQH) form a G2 region. A G3 region spans residues 470 to 473 (DTPG). GTP is bound by residues 470-474 (DTPGH) and 524-527 (NKID). Positions 524-527 (NKID) are G4. The interval 560-562 (SAK) is G5.

The protein belongs to the TRAFAC class translation factor GTPase superfamily. Classic translation factor GTPase family. IF-2 subfamily.

The protein resides in the cytoplasm. In terms of biological role, one of the essential components for the initiation of protein synthesis. Protects formylmethionyl-tRNA from spontaneous hydrolysis and promotes its binding to the 30S ribosomal subunits. Also involved in the hydrolysis of GTP during the formation of the 70S ribosomal complex. The chain is Translation initiation factor IF-2 from Xanthomonas campestris pv. campestris (strain B100).